The sequence spans 217 residues: Thymidylate kinase (217 aa).

7–14 (GIDGAGKS) is a binding site for ATP.

It belongs to the thymidylate kinase family.

It catalyses the reaction dTMP + ATP = dTDP + ADP. Functionally, phosphorylation of dTMP to form dTDP in both de novo and salvage pathways of dTTP synthesis. This Chlorobaculum parvum (strain DSM 263 / NCIMB 8327) (Chlorobium vibrioforme subsp. thiosulfatophilum) protein is Thymidylate kinase.